A 249-amino-acid chain; its full sequence is Ribosomal RNA small subunit methyltransferase G (249 aa).

3 residues coordinate S-adenosyl-L-methionine: G86, F91, and R178.

Belongs to the methyltransferase superfamily. RNA methyltransferase RsmG family.

The protein localises to the cytoplasm. Functionally, specifically methylates the N7 position of a guanine in 16S rRNA. The sequence is that of Ribosomal RNA small subunit methyltransferase G from Bifidobacterium adolescentis (strain ATCC 15703 / DSM 20083 / NCTC 11814 / E194a).